We begin with the raw amino-acid sequence, 211 residues long: Thiamine-phosphate synthase (211 aa).

4-amino-2-methyl-5-(diphosphooxymethyl)pyrimidine contacts are provided by residues 40–42 and Asn72; that span reads QLR. 2 residues coordinate Mg(2+): Asp73 and Asp92. Ser111 contributes to the 4-amino-2-methyl-5-(diphosphooxymethyl)pyrimidine binding site. Residue 136–138 coordinates 2-[(2R,5Z)-2-carboxy-4-methylthiazol-5(2H)-ylidene]ethyl phosphate; sequence TST. Position 139 (Lys139) interacts with 4-amino-2-methyl-5-(diphosphooxymethyl)pyrimidine. 2-[(2R,5Z)-2-carboxy-4-methylthiazol-5(2H)-ylidene]ethyl phosphate-binding positions include Gly167 and 187 to 188; that span reads VS.

This sequence belongs to the thiamine-phosphate synthase family. Mg(2+) is required as a cofactor.

It catalyses the reaction 2-[(2R,5Z)-2-carboxy-4-methylthiazol-5(2H)-ylidene]ethyl phosphate + 4-amino-2-methyl-5-(diphosphooxymethyl)pyrimidine + 2 H(+) = thiamine phosphate + CO2 + diphosphate. The enzyme catalyses 2-(2-carboxy-4-methylthiazol-5-yl)ethyl phosphate + 4-amino-2-methyl-5-(diphosphooxymethyl)pyrimidine + 2 H(+) = thiamine phosphate + CO2 + diphosphate. It carries out the reaction 4-methyl-5-(2-phosphooxyethyl)-thiazole + 4-amino-2-methyl-5-(diphosphooxymethyl)pyrimidine + H(+) = thiamine phosphate + diphosphate. The protein operates within cofactor biosynthesis; thiamine diphosphate biosynthesis; thiamine phosphate from 4-amino-2-methyl-5-diphosphomethylpyrimidine and 4-methyl-5-(2-phosphoethyl)-thiazole: step 1/1. Condenses 4-methyl-5-(beta-hydroxyethyl)thiazole monophosphate (THZ-P) and 2-methyl-4-amino-5-hydroxymethyl pyrimidine pyrophosphate (HMP-PP) to form thiamine monophosphate (TMP). The polypeptide is Thiamine-phosphate synthase (Laribacter hongkongensis (strain HLHK9)).